A 316-amino-acid polypeptide reads, in one-letter code: 4-hydroxy-3-methylbut-2-enyl diphosphate reductase (316 aa).

A [4Fe-4S] cluster-binding site is contributed by Cys12. 2 residues coordinate (2E)-4-hydroxy-3-methylbut-2-enyl diphosphate: His41 and His74. Dimethylallyl diphosphate contacts are provided by His41 and His74. Residues His41 and His74 each coordinate isopentenyl diphosphate. Cys96 lines the [4Fe-4S] cluster pocket. His124 provides a ligand contact to (2E)-4-hydroxy-3-methylbut-2-enyl diphosphate. His124 lines the dimethylallyl diphosphate pocket. His124 contacts isopentenyl diphosphate. Glu126 serves as the catalytic Proton donor. (2E)-4-hydroxy-3-methylbut-2-enyl diphosphate is bound at residue Thr169. Cys199 serves as a coordination point for [4Fe-4S] cluster. Residues Ser227, Ser228, Asn229, and Ser271 each contribute to the (2E)-4-hydroxy-3-methylbut-2-enyl diphosphate site. Ser227, Ser228, Asn229, and Ser271 together coordinate dimethylallyl diphosphate. Positions 227, 228, 229, and 271 each coordinate isopentenyl diphosphate.

Belongs to the IspH family. Requires [4Fe-4S] cluster as cofactor.

The enzyme catalyses isopentenyl diphosphate + 2 oxidized [2Fe-2S]-[ferredoxin] + H2O = (2E)-4-hydroxy-3-methylbut-2-enyl diphosphate + 2 reduced [2Fe-2S]-[ferredoxin] + 2 H(+). It catalyses the reaction dimethylallyl diphosphate + 2 oxidized [2Fe-2S]-[ferredoxin] + H2O = (2E)-4-hydroxy-3-methylbut-2-enyl diphosphate + 2 reduced [2Fe-2S]-[ferredoxin] + 2 H(+). It participates in isoprenoid biosynthesis; dimethylallyl diphosphate biosynthesis; dimethylallyl diphosphate from (2E)-4-hydroxy-3-methylbutenyl diphosphate: step 1/1. The protein operates within isoprenoid biosynthesis; isopentenyl diphosphate biosynthesis via DXP pathway; isopentenyl diphosphate from 1-deoxy-D-xylulose 5-phosphate: step 6/6. In terms of biological role, catalyzes the conversion of 1-hydroxy-2-methyl-2-(E)-butenyl 4-diphosphate (HMBPP) into a mixture of isopentenyl diphosphate (IPP) and dimethylallyl diphosphate (DMAPP). Acts in the terminal step of the DOXP/MEP pathway for isoprenoid precursor biosynthesis. In Stenotrophomonas maltophilia (strain R551-3), this protein is 4-hydroxy-3-methylbut-2-enyl diphosphate reductase.